The primary structure comprises 335 residues: Biotin synthase (335 aa).

In terms of domain architecture, Radical SAM core spans V53–R276. [4Fe-4S] cluster-binding residues include C66, C70, and C73. 4 residues coordinate [2Fe-2S] cluster: C109, C142, C201, and R271.

Belongs to the radical SAM superfamily. Biotin synthase family. Homodimer. Requires [4Fe-4S] cluster as cofactor. [2Fe-2S] cluster is required as a cofactor.

The catalysed reaction is (4R,5S)-dethiobiotin + (sulfur carrier)-SH + 2 reduced [2Fe-2S]-[ferredoxin] + 2 S-adenosyl-L-methionine = (sulfur carrier)-H + biotin + 2 5'-deoxyadenosine + 2 L-methionine + 2 oxidized [2Fe-2S]-[ferredoxin]. Its pathway is cofactor biosynthesis; biotin biosynthesis; biotin from 7,8-diaminononanoate: step 2/2. Catalyzes the conversion of dethiobiotin (DTB) to biotin by the insertion of a sulfur atom into dethiobiotin via a radical-based mechanism. This chain is Biotin synthase, found in Acidothermus cellulolyticus (strain ATCC 43068 / DSM 8971 / 11B).